The sequence spans 215 residues: Adenylate kinase (215 aa).

10 to 15 is an ATP binding site; the sequence is GAGKGT. The tract at residues 30–59 is NMP; sequence STGDMFRAAMKNETEMGKLAKSFIDKGELV. AMP-binding positions include T31, R36, 57 to 59, 86 to 89, and Q93; these read ELV and GYPR. The segment at 127-165 is LID; sequence GRYICRNCGATYHKIFNPTKVEGTCDVCGSHDLYQRADD. R128 contacts ATP. Zn(2+) is bound by residues C131 and C134. 137-138 serves as a coordination point for ATP; that stretch reads TY. C151 and C154 together coordinate Zn(2+). 2 residues coordinate AMP: R162 and R173. Residue Q201 participates in ATP binding.

It belongs to the adenylate kinase family. Monomer.

Its subcellular location is the cytoplasm. The catalysed reaction is AMP + ATP = 2 ADP. The protein operates within purine metabolism; AMP biosynthesis via salvage pathway; AMP from ADP: step 1/1. Its function is as follows. Catalyzes the reversible transfer of the terminal phosphate group between ATP and AMP. Plays an important role in cellular energy homeostasis and in adenine nucleotide metabolism. In Lactococcus lactis subsp. cremoris (strain SK11), this protein is Adenylate kinase.